The sequence spans 168 residues: Skp-like protein (168 aa).

The N-terminal stretch at 1-22 (MRKFTQFVLITAAIMAAPSAFA) is a signal peptide.

The protein belongs to the Skp family.

This is Skp-like protein from Pseudomonas aeruginosa (strain ATCC 15692 / DSM 22644 / CIP 104116 / JCM 14847 / LMG 12228 / 1C / PRS 101 / PAO1).